An 86-amino-acid chain; its full sequence is Small ribosomal subunit protein bS16 (86 aa).

It belongs to the bacterial ribosomal protein bS16 family.

The polypeptide is Small ribosomal subunit protein bS16 (Nostoc punctiforme (strain ATCC 29133 / PCC 73102)).